Reading from the N-terminus, the 663-residue chain is Alpha-1,4-glucan:maltose-1-phosphate maltosyltransferase (663 aa).

Residues 238–266 are disordered; that stretch reads IGETNRKGPDDAPEAGPDDPGSPWAIGGF. Positions 244, 309, and 344 each coordinate alpha-maltose 1-phosphate. Residue Asp-380 is the Nucleophile of the active site. Residue Asn-381 coordinates alpha-maltose 1-phosphate. The active-site Proton donor is the Glu-409. 521 to 522 contributes to the alpha-maltose 1-phosphate binding site; that stretch reads KY.

Belongs to the glycosyl hydrolase 13 family. GlgE subfamily. As to quaternary structure, homodimer.

The catalysed reaction is alpha-maltose 1-phosphate + [(1-&gt;4)-alpha-D-glucosyl](n) = [(1-&gt;4)-alpha-D-glucosyl](n+2) + phosphate. Maltosyltransferase that uses maltose 1-phosphate (M1P) as the sugar donor to elongate linear or branched alpha-(1-&gt;4)-glucans. Is involved in a branched alpha-glucan biosynthetic pathway from trehalose, together with TreS, Mak and GlgB. This Salinibacter ruber (strain DSM 13855 / M31) protein is Alpha-1,4-glucan:maltose-1-phosphate maltosyltransferase.